We begin with the raw amino-acid sequence, 463 residues long: Argininosuccinate lyase (463 aa).

Belongs to the lyase 1 family. Argininosuccinate lyase subfamily.

Its subcellular location is the cytoplasm. The enzyme catalyses 2-(N(omega)-L-arginino)succinate = fumarate + L-arginine. It participates in amino-acid biosynthesis; L-arginine biosynthesis; L-arginine from L-ornithine and carbamoyl phosphate: step 3/3. The chain is Argininosuccinate lyase from Thermosynechococcus vestitus (strain NIES-2133 / IAM M-273 / BP-1).